A 231-amino-acid chain; its full sequence is Response regulator MprA (231 aa).

Positions 4–118 (RILVVDDDRA…ELLARMRALL (115 aa)) constitute a Response regulatory domain. Asp48 carries the post-translational modification 4-aspartylphosphate. Positions 130 to 228 (SAAMTFSDLS…VRGVGYVLRE (99 aa)) form a DNA-binding region, ompR/PhoB-type.

Phosphorylated and dephosphorylated by MprB.

It is found in the cytoplasm. In terms of biological role, member of the two-component regulatory system MprB/MprA which contributes to maintaining a balance among several systems involved in stress resistance and is required for establishment and maintenance of persistent infection in the host. Functions as a transcriptional regulator that recognizes a 19-bp nucleotide motif comprizing two loosely conserved 8-bp direct DNA-binding motif repeats separated by a 3-bp spacer region. The protein is Response regulator MprA (mprA) of Mycolicibacterium vanbaalenii (strain DSM 7251 / JCM 13017 / BCRC 16820 / KCTC 9966 / NRRL B-24157 / PYR-1) (Mycobacterium vanbaalenii).